We begin with the raw amino-acid sequence, 58 residues long: Large ribosomal subunit protein uL30 (58 aa).

This sequence belongs to the universal ribosomal protein uL30 family. In terms of assembly, part of the 50S ribosomal subunit.

The chain is Large ribosomal subunit protein uL30 from Wigglesworthia glossinidia brevipalpis.